The primary structure comprises 124 residues: Small ribosomal subunit protein uS12 (124 aa).

Residues 1 to 23 (MATINQLVRKPRKRPVAKSDVPA) form a disordered region. Residue Asp-89 is modified to 3-methylthioaspartic acid. A disordered region spans residues 101–124 (ALDTSGVQNRRQGRSKYGTKRPKS). A compositionally biased stretch (basic residues) spans 111–124 (RQGRSKYGTKRPKS).

Belongs to the universal ribosomal protein uS12 family. Part of the 30S ribosomal subunit. Contacts proteins S8 and S17. May interact with IF1 in the 30S initiation complex.

Its function is as follows. With S4 and S5 plays an important role in translational accuracy. In terms of biological role, interacts with and stabilizes bases of the 16S rRNA that are involved in tRNA selection in the A site and with the mRNA backbone. Located at the interface of the 30S and 50S subunits, it traverses the body of the 30S subunit contacting proteins on the other side and probably holding the rRNA structure together. The combined cluster of proteins S8, S12 and S17 appears to hold together the shoulder and platform of the 30S subunit. The protein is Small ribosomal subunit protein uS12 of Chromohalobacter salexigens (strain ATCC BAA-138 / DSM 3043 / CIP 106854 / NCIMB 13768 / 1H11).